Reading from the N-terminus, the 352-residue chain is Phenylalanine--tRNA ligase alpha subunit (352 aa).

Glu-258 contacts Mg(2+).

This sequence belongs to the class-II aminoacyl-tRNA synthetase family. Phe-tRNA synthetase alpha subunit type 1 subfamily. In terms of assembly, tetramer of two alpha and two beta subunits. The cofactor is Mg(2+).

Its subcellular location is the cytoplasm. It catalyses the reaction tRNA(Phe) + L-phenylalanine + ATP = L-phenylalanyl-tRNA(Phe) + AMP + diphosphate + H(+). In Staphylococcus aureus (strain Mu3 / ATCC 700698), this protein is Phenylalanine--tRNA ligase alpha subunit.